A 56-amino-acid polypeptide reads, in one-letter code: Large ribosomal subunit protein bL33 (56 aa).

It belongs to the bacterial ribosomal protein bL33 family.

The polypeptide is Large ribosomal subunit protein bL33 (Dichelobacter nodosus (strain VCS1703A)).